The chain runs to 266 residues: uncharacterized protein (266 aa).

Positions 1-22 are cleaved as a signal peptide; sequence MGYFKRVVLYIIVMVVSVFIIG. A lipid anchor (N-palmitoyl cysteine) is attached at Cys-23. Cys-23 carries S-diacylglycerol cysteine lipidation.

Belongs to the staphylococcal tandem lipoprotein family.

Its subcellular location is the cell membrane. This is an uncharacterized protein from Staphylococcus aureus (strain N315).